The chain runs to 166 residues: UPF0134 protein MPN_138 (166 aa).

The protein belongs to the UPF0134 family.

In Mycoplasma pneumoniae (strain ATCC 29342 / M129 / Subtype 1) (Mycoplasmoides pneumoniae), this protein is UPF0134 protein MPN_138.